The primary structure comprises 901 residues: Protein translocase subunit SecA (901 aa).

ATP contacts are provided by residues glutamine 87, glycine 105–threonine 109, and aspartate 512. Zn(2+) contacts are provided by cysteine 885, cysteine 887, cysteine 896, and histidine 897.

The protein belongs to the SecA family. In terms of assembly, monomer and homodimer. Part of the essential Sec protein translocation apparatus which comprises SecA, SecYEG and auxiliary proteins SecDF-YajC and YidC. It depends on Zn(2+) as a cofactor.

The protein resides in the cell inner membrane. The protein localises to the cytoplasm. It carries out the reaction ATP + H2O + cellular proteinSide 1 = ADP + phosphate + cellular proteinSide 2.. Part of the Sec protein translocase complex. Interacts with the SecYEG preprotein conducting channel. Has a central role in coupling the hydrolysis of ATP to the transfer of proteins into and across the cell membrane, serving both as a receptor for the preprotein-SecB complex and as an ATP-driven molecular motor driving the stepwise translocation of polypeptide chains across the membrane. The protein is Protein translocase subunit SecA of Salmonella paratyphi B (strain ATCC BAA-1250 / SPB7).